The chain runs to 1039 residues: Probable inorganic carbon transporter subunit DabA 1 (1039 aa).

Residues Cys462, Asp464, His721, and Cys736 each coordinate Zn(2+).

It belongs to the inorganic carbon transporter (TC 9.A.2) DabA family. As to quaternary structure, forms a complex with DabB. The cofactor is Zn(2+).

It is found in the cell inner membrane. Functionally, part of an energy-coupled inorganic carbon pump. This chain is Probable inorganic carbon transporter subunit DabA 1, found in Nitrobacter hamburgensis (strain DSM 10229 / NCIMB 13809 / X14).